The chain runs to 354 residues: MTELKNDRFLRALQGQPVDVTPVWMMRQAGRYLPEYRATRARAGDFMGLCTNPQLACEVTLQPLQRYPLDAAILFSDILTVPDAMGLGLYFETGEGPKFRNPVRTAAQVEALPVVNAENELTYVLDAVKTIRHELNGAVPLIGFSGSPWTLMTYMVEGGSSKDFRRSKAMLYSEPEVARLLLDKLVASVTDYLNAQIRAGAQAVQIFDSWGGALAHDAYLEFSLKPMQQIVNGLIREHQGRQVPVILFTKGGGQWLEAMAETGVTALGLDWTTDIGNARERVGGKVALQGNMDPSVLYASTSAIRDEVGRILASYGHGSGHVFNLGHGITPEVDPVHAGAFINAVHELSAGYHQ.

Residues 27–31 (RQAGR), Asp-77, Tyr-154, Ser-209, and His-327 each bind substrate.

Belongs to the uroporphyrinogen decarboxylase family. As to quaternary structure, homodimer.

The protein localises to the cytoplasm. It catalyses the reaction uroporphyrinogen III + 4 H(+) = coproporphyrinogen III + 4 CO2. The protein operates within porphyrin-containing compound metabolism; protoporphyrin-IX biosynthesis; coproporphyrinogen-III from 5-aminolevulinate: step 4/4. Its function is as follows. Catalyzes the decarboxylation of four acetate groups of uroporphyrinogen-III to yield coproporphyrinogen-III. The polypeptide is Uroporphyrinogen decarboxylase (Teredinibacter turnerae (strain ATCC 39867 / T7901)).